The chain runs to 265 residues: 6-oxopurine nucleoside phosphorylase (265 aa).

Phosphate-binding positions include Ser-10, 49-50, and 82-83; these read RH and SA. 2 disulfide bridges follow: Cys-136/Cys-202 and Cys-162/Cys-190. Position 187 (Met-187) interacts with substrate. Phosphate is bound at residue Thr-188. 211 to 213 contributes to the substrate binding site; that stretch reads NYA. A disulfide bond links Cys-254 and Cys-256.

Belongs to the PNP/MTAP phosphorylase family. MTAP subfamily. Homohexamer. Dimer of a homotrimer.

It catalyses the reaction a purine D-ribonucleoside + phosphate = a purine nucleobase + alpha-D-ribose 1-phosphate. The enzyme catalyses guanosine + phosphate = alpha-D-ribose 1-phosphate + guanine. The catalysed reaction is inosine + phosphate = alpha-D-ribose 1-phosphate + hypoxanthine. It functions in the pathway purine metabolism; purine nucleoside salvage. Functionally, purine nucleoside phosphorylase which is highly specific for 6-oxopurine nucleosides. Cleaves guanosine or inosine to respective bases and sugar-1-phosphate molecules. Involved in purine salvage. In Pyrococcus furiosus (strain ATCC 43587 / DSM 3638 / JCM 8422 / Vc1), this protein is 6-oxopurine nucleoside phosphorylase.